Here is an 880-residue protein sequence, read N- to C-terminus: Lon protease (880 aa).

The tract at residues M1–H37 is disordered. Over residues E27–H37 the composition is skewed to basic and acidic residues. The Lon N-terminal domain maps to L57–V251. G404–T411 is an ATP binding site. Residues K640–G821 form the Lon proteolytic domain. Residues S727 and K770 contribute to the active site. Positions G826–D836 are enriched in gly residues. The segment at G826–A880 is disordered. Positions A852–P861 are enriched in low complexity.

The protein belongs to the peptidase S16 family. Homohexamer. Organized in a ring with a central cavity.

The protein localises to the cytoplasm. It carries out the reaction Hydrolysis of proteins in presence of ATP.. Functionally, ATP-dependent serine protease that mediates the selective degradation of mutant and abnormal proteins as well as certain short-lived regulatory proteins. Required for cellular homeostasis and for survival from DNA damage and developmental changes induced by stress. Degrades polypeptides processively to yield small peptide fragments that are 5 to 10 amino acids long. Binds to DNA in a double-stranded, site-specific manner. The protein is Lon protease of Desulfovibrio desulfuricans (strain ATCC 27774 / DSM 6949 / MB).